A 98-amino-acid polypeptide reads, in one-letter code: Cystatin-B (98 aa).

Met1 is modified (N-acetylmethionine). Positions 46–50 (QIVAG) match the Secondary area of contact motif.

This sequence belongs to the cystatin family. As to expression, widely expressed. Highest expression in heart, liver and kidney. Lower levels in brain, lung and skeletal muscle. Lowest levels in spleen and testis.

Its subcellular location is the cytoplasm. In terms of biological role, this is an intracellular thiol proteinase inhibitor. This is Cystatin-B (Cstb) from Mus musculus (Mouse).